Reading from the N-terminus, the 404-residue chain is MKLPIYLDYAATCPVDERVAKKMMAFLTIDGTFGNPASRSHKFGWQAEEAVDIARNQIADLIGADSREIVFTSGATESDNLAIKGAAHFYQTKGKHIITCKTEHKAVLDTCRQLEREGFEVTYLSPEADGLIDLEKFKAALRPDTILASIMHANNEIGVLQDIKAIGELCRANKTIFHVDATQSVGKVEINLEELAVDLMSMSSHKLYGPKGVGALYVRRKPRVRLEAIIHGGGHERGMRSGTLPVHQIVGMGEAYRIAKEEMASEMPRLKALRDRLYNGLKDIEETYVNGSMEHRLDSNLNISFNYVEGESLMMALRDIAVSSGSACTSASLEPSYVLRALGLNDELAHSSIRFTLGRYTTEEEIDYTINLMKGAVEKLRALSPLWDMFKEGIDLNTIEWSAH.

Residues 75–76, Asn-155, Gln-183, and 203–205 contribute to the pyridoxal 5'-phosphate site; these read AT and SSH. Lys-206 bears the N6-(pyridoxal phosphate)lysine mark. Thr-243 contacts pyridoxal 5'-phosphate. Cys-328 functions as the Cysteine persulfide intermediate in the catalytic mechanism. [2Fe-2S] cluster is bound at residue Cys-328.

This sequence belongs to the class-V pyridoxal-phosphate-dependent aminotransferase family. NifS/IscS subfamily. Homodimer. Forms a heterotetramer with IscU, interacts with other sulfur acceptors. Requires pyridoxal 5'-phosphate as cofactor.

Its subcellular location is the cytoplasm. The catalysed reaction is (sulfur carrier)-H + L-cysteine = (sulfur carrier)-SH + L-alanine. It functions in the pathway cofactor biosynthesis; iron-sulfur cluster biosynthesis. Master enzyme that delivers sulfur to a number of partners involved in Fe-S cluster assembly, tRNA modification or cofactor biosynthesis. Catalyzes the removal of elemental sulfur atoms from cysteine to produce alanine. Functions as a sulfur delivery protein for Fe-S cluster synthesis onto IscU, an Fe-S scaffold assembly protein, as well as other S acceptor proteins. The sequence is that of Cysteine desulfurase IscS from Haemophilus influenzae (strain PittGG).